A 328-amino-acid chain; its full sequence is Ketol-acid reductoisomerase (NADP(+)) (328 aa).

The KARI N-terminal Rossmann domain maps to 2–182 (AKIYRDGDAS…GATRAGVIET (181 aa)). NADP(+)-binding positions include 25-28 (YGIQ), Arg-48, Ser-53, and 83-86 (DMEQ). His-108 is a catalytic residue. Gly-134 serves as a coordination point for NADP(+). The region spanning 183–328 (TFAEETETDL…AEMRKLLFGP (146 aa)) is the KARI C-terminal knotted domain. Residues Asp-191, Glu-195, Glu-227, and Glu-231 each contribute to the Mg(2+) site. Ser-252 contacts substrate.

It belongs to the ketol-acid reductoisomerase family. Mg(2+) is required as a cofactor.

The enzyme catalyses (2R)-2,3-dihydroxy-3-methylbutanoate + NADP(+) = (2S)-2-acetolactate + NADPH + H(+). It catalyses the reaction (2R,3R)-2,3-dihydroxy-3-methylpentanoate + NADP(+) = (S)-2-ethyl-2-hydroxy-3-oxobutanoate + NADPH + H(+). The protein operates within amino-acid biosynthesis; L-isoleucine biosynthesis; L-isoleucine from 2-oxobutanoate: step 2/4. It participates in amino-acid biosynthesis; L-valine biosynthesis; L-valine from pyruvate: step 2/4. Its function is as follows. Involved in the biosynthesis of branched-chain amino acids (BCAA). Catalyzes an alkyl-migration followed by a ketol-acid reduction of (S)-2-acetolactate (S2AL) to yield (R)-2,3-dihydroxy-isovalerate. In the isomerase reaction, S2AL is rearranged via a Mg-dependent methyl migration to produce 3-hydroxy-3-methyl-2-ketobutyrate (HMKB). In the reductase reaction, this 2-ketoacid undergoes a metal-dependent reduction by NADPH to yield (R)-2,3-dihydroxy-isovalerate. The protein is Ketol-acid reductoisomerase (NADP(+)) of Pyrobaculum calidifontis (strain DSM 21063 / JCM 11548 / VA1).